The chain runs to 101 residues: Large ribosomal subunit protein uL24 (101 aa).

It belongs to the universal ribosomal protein uL24 family. In terms of assembly, part of the 50S ribosomal subunit.

Its function is as follows. One of two assembly initiator proteins, it binds directly to the 5'-end of the 23S rRNA, where it nucleates assembly of the 50S subunit. Functionally, one of the proteins that surrounds the polypeptide exit tunnel on the outside of the subunit. The protein is Large ribosomal subunit protein uL24 of Streptococcus uberis (strain ATCC BAA-854 / 0140J).